Consider the following 461-residue polypeptide: A-type ATP synthase subunit B (461 aa).

This sequence belongs to the ATPase alpha/beta chains family. Has multiple subunits with at least A(3), B(3), C, D, E, F, H, I and proteolipid K(x).

It is found in the cell membrane. Functionally, component of the A-type ATP synthase that produces ATP from ADP in the presence of a proton gradient across the membrane. The B chain is a regulatory subunit. This is A-type ATP synthase subunit B from Methanoculleus marisnigri (strain ATCC 35101 / DSM 1498 / JR1).